The sequence spans 196 residues: Interleukin-23 subunit alpha (196 aa).

An N-terminal signal peptide occupies residues 1-21 (MLDCRAVIMLWLLPWVTQGLA).

The protein belongs to the IL-6 superfamily. In terms of assembly, heterodimer with IL12B; disulfide-linked. The heterodimer is known as interleukin IL-23. Interacts with IL23R; this interaction enables recruitment of IL12RB1. Secreted by activated dendritic cells (at protein level). Detected in various tissues with higher expression in polarized Th1 cells and activated macrophages.

It localises to the secreted. Associates with IL12B to form the IL-23 interleukin, a heterodimeric cytokine which functions in innate and adaptive immunity. IL-23 may constitute with IL-17 an acute response to infection in peripheral tissues. IL-23 binds to a heterodimeric receptor complex composed of IL12RB1 and IL23R, activates the Jak-Stat signaling cascade, stimulates memory rather than naive T-cells and promotes production of pro-inflammatory cytokines. IL-23 induces autoimmune inflammation and thus may be responsible for autoimmune inflammatory diseases and may be important for tumorigenesis. Functionally, associates with IL12B to form the pro-inflammatory cytokine IL-23 that plays different roles in innate and adaptive immunity. Released by antigen-presenting cells such as dendritic cells or macrophages, binds to a heterodimeric receptor complex composed of IL12RB1 and IL23R to activate JAK2 and TYK2 which then phosphorylate the receptor to form a docking site leading to the phosphorylation of STAT3 and STAT4. This process leads to activation of several pathways including p38 MAPK or NF-kappa-B and promotes the production of pro-inflammatory cytokines such as interleukin-17A/IL17A. In turn, participates in the early and effective intracellular bacterial clearance. Promotes the expansion and survival of T-helper 17 cells, a CD4-positive helper T-cell subset that produces IL-17, as well as other IL-17-producing cells. The protein is Interleukin-23 subunit alpha (Il23a) of Mus musculus (Mouse).